Reading from the N-terminus, the 202-residue chain is ATP-dependent Clp protease proteolytic subunit (202 aa).

The active-site Nucleophile is the S101. Residue H126 is part of the active site.

This sequence belongs to the peptidase S14 family. As to quaternary structure, component of the chloroplastic Clp protease core complex.

It is found in the plastid. It localises to the chloroplast stroma. It catalyses the reaction Hydrolysis of proteins to small peptides in the presence of ATP and magnesium. alpha-casein is the usual test substrate. In the absence of ATP, only oligopeptides shorter than five residues are hydrolyzed (such as succinyl-Leu-Tyr-|-NHMec, and Leu-Tyr-Leu-|-Tyr-Trp, in which cleavage of the -Tyr-|-Leu- and -Tyr-|-Trp bonds also occurs).. Functionally, cleaves peptides in various proteins in a process that requires ATP hydrolysis. Has a chymotrypsin-like activity. Plays a major role in the degradation of misfolded proteins. The chain is ATP-dependent Clp protease proteolytic subunit from Liriodendron tulipifera (Tuliptree).